Here is a 551-residue protein sequence, read N- to C-terminus: Hydroxymethylpyrimidine/phosphomethylpyrimidine kinase THI21 (551 aa).

Gln64 is a 4-amino-5-hydroxymethyl-2-methylpyrimidine binding site.

In the N-terminal section; belongs to the ThiD family. The protein in the C-terminal section; belongs to the thiaminase-2 family.

It catalyses the reaction 4-amino-5-hydroxymethyl-2-methylpyrimidine + ATP = 4-amino-2-methyl-5-(phosphooxymethyl)pyrimidine + ADP + H(+). The catalysed reaction is 4-amino-2-methyl-5-(phosphooxymethyl)pyrimidine + ATP = 4-amino-2-methyl-5-(diphosphooxymethyl)pyrimidine + ADP. The protein operates within cofactor biosynthesis; thiamine diphosphate biosynthesis; 4-amino-2-methyl-5-diphosphomethylpyrimidine from 5-amino-1-(5-phospho-D-ribosyl)imidazole: step 2/3. Its pathway is cofactor biosynthesis; thiamine diphosphate biosynthesis; 4-amino-2-methyl-5-diphosphomethylpyrimidine from 5-amino-1-(5-phospho-D-ribosyl)imidazole: step 3/3. Its function is as follows. Catalyzes the phosphorylation of hydroxymethylpyrimidine phosphate (HMP-P) to HMP-PP, and also probably that of HMP to HMP-P. The protein is Hydroxymethylpyrimidine/phosphomethylpyrimidine kinase THI21 (THI21) of Saccharomyces cerevisiae (strain ATCC 204508 / S288c) (Baker's yeast).